The primary structure comprises 296 residues: Phosphoribosylaminoimidazole-succinocarboxamide synthase (296 aa).

The protein belongs to the SAICAR synthetase family.

The catalysed reaction is 5-amino-1-(5-phospho-D-ribosyl)imidazole-4-carboxylate + L-aspartate + ATP = (2S)-2-[5-amino-1-(5-phospho-beta-D-ribosyl)imidazole-4-carboxamido]succinate + ADP + phosphate + 2 H(+). It participates in purine metabolism; IMP biosynthesis via de novo pathway; 5-amino-1-(5-phospho-D-ribosyl)imidazole-4-carboxamide from 5-amino-1-(5-phospho-D-ribosyl)imidazole-4-carboxylate: step 1/2. The sequence is that of Phosphoribosylaminoimidazole-succinocarboxamide synthase from Pelobacter propionicus (strain DSM 2379 / NBRC 103807 / OttBd1).